We begin with the raw amino-acid sequence, 231 residues long: Elongation factor 1-delta (231 aa).

Positions 75-136 (SGVTVEGNAP…AAAAAAKPAK (62 aa)) are disordered. Residues 101–117 (ADDDDDDDVDLFGEETE) show a composition bias toward acidic residues. Positions 118–127 (EEKKAAEERA) are enriched in basic and acidic residues.

This sequence belongs to the EF-1-beta/EF-1-delta family. In terms of assembly, EF-1 is composed of 4 subunits: alpha, beta (1B-alpha=beta'), delta (1B-beta), and gamma (1B-gamma).

In terms of biological role, EF-1-beta and EF-1-beta' stimulate the exchange of GDP bound to EF-1-alpha to GTP. This is Elongation factor 1-delta from Beta vulgaris (Sugar beet).